The following is a 371-amino-acid chain: Geranylgeranyl transferase type-2 subunit alpha (371 aa).

PFTA repeat units follow at residues 45–79 (YSDEALIKTNELLIINPEFYTIWNYRREILINNYS), 92–126 (ILNQDLNFVLVQLKKFPKCYWIWNHRRWLLFELVK), 131–165 (NWKYEFGVVSKLLDLDQRNFHGWHYRRFVVKNMEL), 177–211 (INLDEFNYTTLKIQKDFSNFSAWHNRTKLIPKIYN), and 242–276 (LLKNDLEMIKTGVYMSPEDTSVWLYLYWLLTDDLF).

The protein belongs to the protein prenyltransferase subunit alpha family. As to quaternary structure, heterodimer of an alpha and a beta subunit.

The enzyme catalyses geranylgeranyl diphosphate + L-cysteinyl-[protein] = S-geranylgeranyl-L-cysteinyl-[protein] + diphosphate. Catalyzes the transfer of a geranyl-geranyl moiety from geranyl-geranyl pyrophosphate to proteins having the C-terminal -XCC or -XCXC, where both cysteines may become modified. Acts on YPT1 and SEC4. In Candida albicans (Yeast), this protein is Geranylgeranyl transferase type-2 subunit alpha (BET4).